The sequence spans 350 residues: Small ribosomal subunit biogenesis GTPase RsgA (350 aa).

The disordered stretch occupies residues methionine 1–lysine 30. The segment covering threonine 7–lysine 20 has biased composition (polar residues). Basic residues predominate over residues threonine 21–lysine 30. The CP-type G domain occupies histidine 106–phenylalanine 274. GTP contacts are provided by residues asparagine 162 to aspartate 165 and glycine 216 to serine 224. Residues cysteine 298, cysteine 303, histidine 305, and cysteine 311 each coordinate Zn(2+).

This sequence belongs to the TRAFAC class YlqF/YawG GTPase family. RsgA subfamily. Monomer. Associates with 30S ribosomal subunit, binds 16S rRNA. The cofactor is Zn(2+).

The protein localises to the cytoplasm. One of several proteins that assist in the late maturation steps of the functional core of the 30S ribosomal subunit. Helps release RbfA from mature subunits. May play a role in the assembly of ribosomal proteins into the subunit. Circularly permuted GTPase that catalyzes slow GTP hydrolysis, GTPase activity is stimulated by the 30S ribosomal subunit. The sequence is that of Small ribosomal subunit biogenesis GTPase RsgA from Histophilus somni (strain 129Pt) (Haemophilus somnus).